Reading from the N-terminus, the 753-residue chain is 5-methyltetrahydropteroyltriglutamate--homocysteine methyltransferase (753 aa).

5-methyltetrahydropteroyltri-L-glutamate is bound by residues 17 to 20 (RELK) and Lys-117. L-homocysteine-binding positions include 431–433 (IGS) and Glu-484. L-methionine is bound by residues 431-433 (IGS) and Glu-484. 5-methyltetrahydropteroyltri-L-glutamate-binding positions include 515–516 (RC) and Trp-561. Position 599 (Asp-599) interacts with L-homocysteine. Asp-599 lines the L-methionine pocket. Glu-605 lines the 5-methyltetrahydropteroyltri-L-glutamate pocket. Residues His-641, Cys-643, and Glu-665 each coordinate Zn(2+). The active-site Proton donor is His-694. Cys-726 contacts Zn(2+).

The protein belongs to the vitamin-B12 independent methionine synthase family. The cofactor is Zn(2+).

It catalyses the reaction 5-methyltetrahydropteroyltri-L-glutamate + L-homocysteine = tetrahydropteroyltri-L-glutamate + L-methionine. It participates in amino-acid biosynthesis; L-methionine biosynthesis via de novo pathway; L-methionine from L-homocysteine (MetE route): step 1/1. In terms of biological role, catalyzes the transfer of a methyl group from 5-methyltetrahydrofolate to homocysteine resulting in methionine formation. This Escherichia fergusonii (strain ATCC 35469 / DSM 13698 / CCUG 18766 / IAM 14443 / JCM 21226 / LMG 7866 / NBRC 102419 / NCTC 12128 / CDC 0568-73) protein is 5-methyltetrahydropteroyltriglutamate--homocysteine methyltransferase.